The sequence spans 216 residues: Putative transmembrane protein RNF32-DT (216 aa).

A helical transmembrane segment spans residues 177-197 (WIPLLLVAGCVSCFVGLAVCV).

Expressed only in testis.

The protein localises to the cytoplasm. Its subcellular location is the membrane. The polypeptide is Putative transmembrane protein RNF32-DT (Homo sapiens (Human)).